The sequence spans 1454 residues: ABC transporter G family member 39 (1454 aa).

An ABC transporter 1 domain is found at 175-448; sequence LGFFHLLPSK…FEYFGFQCPE (274 aa). 208-215 contacts ATP; it reads GPPSSGKT. In terms of domain architecture, ABC transmembrane type-2 1 spans 526 to 739; that stretch reads ELFKACFDRE…GQTAIVMNEF (214 aa). Transmembrane regions (helical) follow at residues 544-564, 584-604, 623-643, 663-683, 689-709, 716-736, and 775-795; these read FVYV…MTVY, MFFS…FTVM, FALP…GIWI, LLAY…LGAI, ISNS…GFII, PWMT…AIVM, and FWIC…FYIL. The span at 812 to 824 shows a compositional bias: basic and acidic residues; the sequence is EEGKDKQKGENRG. Residues 812-838 are disordered; that stretch reads EEGKDKQKGENRGTEGSVVELNSSSNK. Residues 853–1106 form the ABC transporter 2 domain; the sequence is LAFNNVNYYV…LVEYFEAVEG (254 aa). 898 to 905 is an ATP binding site; sequence GVSGAGKT. The region spanning 1178 to 1392 is the ABC transmembrane type-2 2 domain; sequence TQTKACFWKQ…TLYGLITSQV (215 aa). 7 helical membrane passes run 1199–1219, 1231–1251, 1285–1303, 1312–1332, 1342–1362, 1367–1387, and 1423–1443; these read AIRF…FWQI, NFFG…AATV, IMYN…YSMI, FLWF…YGMM, IAGI…GFLI, IPIW…LYGL, and FLPV…FVFA.

It belongs to the ABC transporter superfamily. ABCG family. PDR (TC 3.A.1.205) subfamily.

The protein localises to the membrane. May be a general defense protein. The polypeptide is ABC transporter G family member 39 (ABCG39) (Arabidopsis thaliana (Mouse-ear cress)).